An 89-amino-acid chain; its full sequence is Small ribosomal subunit protein uS15 (89 aa).

This sequence belongs to the universal ribosomal protein uS15 family. As to quaternary structure, part of the 30S ribosomal subunit. Forms a bridge to the 50S subunit in the 70S ribosome, contacting the 23S rRNA.

One of the primary rRNA binding proteins, it binds directly to 16S rRNA where it helps nucleate assembly of the platform of the 30S subunit by binding and bridging several RNA helices of the 16S rRNA. Functionally, forms an intersubunit bridge (bridge B4) with the 23S rRNA of the 50S subunit in the ribosome. This Buchnera aphidicola subsp. Schizaphis graminum (strain Sg) protein is Small ribosomal subunit protein uS15.